Reading from the N-terminus, the 205-residue chain is Small ribosomal subunit protein uS5 (205 aa).

The S5 DRBM domain occupies 49 to 112 (LVDEVLDINM…VSAKINLVKV (64 aa)).

It belongs to the universal ribosomal protein uS5 family. As to quaternary structure, part of the 30S ribosomal subunit. Contacts protein S4.

In terms of biological role, with S4 and S12 plays an important role in translational accuracy. In Methanospirillum hungatei JF-1 (strain ATCC 27890 / DSM 864 / NBRC 100397 / JF-1), this protein is Small ribosomal subunit protein uS5.